Consider the following 439-residue polypeptide: Xaa-Pro dipeptidase (439 aa).

Mn(2+) is bound by residues D244, D255, H335, E380, and E419.

It belongs to the peptidase M24B family. Bacterial-type prolidase subfamily. The cofactor is Mn(2+).

The enzyme catalyses Xaa-L-Pro dipeptide + H2O = an L-alpha-amino acid + L-proline. Splits dipeptides with a prolyl residue in the C-terminal position. The protein is Xaa-Pro dipeptidase of Shewanella oneidensis (strain ATCC 700550 / JCM 31522 / CIP 106686 / LMG 19005 / NCIMB 14063 / MR-1).